A 99-amino-acid polypeptide reads, in one-letter code: 10 kDa heat shock protein, mitochondrial (99 aa).

Belongs to the GroES chaperonin family. As to quaternary structure, homoheptamer arranged in a ring structure. 2 heptameric Hsp10 rings interact with a Hsp60 tetradecamer in the structure of a back-to-back double heptameric ring to form the symmetrical football complex.

Its subcellular location is the mitochondrion matrix. Co-chaperonin implicated in mitochondrial protein import and macromolecular assembly. Together with Hsp60, facilitates the correct folding of imported proteins. May also prevent misfolding and promote the refolding and proper assembly of unfolded polypeptides generated under stress conditions in the mitochondrial matrix. The functional units of these chaperonins consist of heptameric rings of the large subunit Hsp60, which function as a back-to-back double ring. In a cyclic reaction, Hsp60 ring complexes bind one unfolded substrate protein per ring, followed by the binding of ATP and association with 2 heptameric rings of the co-chaperonin Hsp10. This leads to sequestration of the substrate protein in the inner cavity of Hsp60 where, for a certain period of time, it can fold undisturbed by other cell components. Synchronous hydrolysis of ATP in all Hsp60 subunits results in the dissociation of the chaperonin rings and the release of ADP and the folded substrate protein. The sequence is that of 10 kDa heat shock protein, mitochondrial (hspe1) from Oryzias latipes (Japanese rice fish).